The chain runs to 1086 residues: Receptor-type guanylate cyclase gcy-6 (1086 aa).

Residues 1-21 (MIGVYLRSVIFPLLFVIQTIC) form the signal peptide. At 22–487 (QPPGNVFHLG…PANVFFQYIG (466 aa)) the chain is on the extracellular side. 4 N-linked (GlcNAc...) asparagine glycosylation sites follow: Asn325, Asn343, Asn387, and Asn427. Residues 488–508 (WFIAAIIIIFFTIMGAILAFI) traverse the membrane as a helical segment. Residues 509-1086 (YLCHAKQQEV…APKILKKKQD (578 aa)) are Cytoplasmic-facing. In terms of domain architecture, Protein kinase spans 560 to 836 (SSTLSEVGET…NDNLMDHVFN (277 aa)). ATP-binding positions include 566–574 (VGETRNYLF) and Lys589. Residues 894–1024 (TLFFSDVVSF…DAVNTASRME (131 aa)) enclose the Guanylate cyclase domain.

Belongs to the adenylyl cyclase class-4/guanylyl cyclase family. Expressed in both ASEL and ASER neurons throughout late embryonic and early larval stages. In adults, expressed asymmetrically in ASE left (ASEL) sensory neuron.

The protein resides in the cell membrane. It carries out the reaction GTP = 3',5'-cyclic GMP + diphosphate. In terms of biological role, guanylate cyclase involved in the production of the second messenger cGMP. Regulates chemotaxis responses toward the salt ion Mg(2+) and to a lesser extent toward Cl(1-) in ASE left (ASEL) sensory neuron. This is Receptor-type guanylate cyclase gcy-6 from Caenorhabditis elegans.